The following is a 436-amino-acid chain: Trigger factor (436 aa).

Positions 161–246 (GMRVTMDFVG…LNKVEEQILP (86 aa)) constitute a PPIase FKBP-type domain.

The protein belongs to the FKBP-type PPIase family. Tig subfamily.

It localises to the cytoplasm. The catalysed reaction is [protein]-peptidylproline (omega=180) = [protein]-peptidylproline (omega=0). In terms of biological role, involved in protein export. Acts as a chaperone by maintaining the newly synthesized protein in an open conformation. Functions as a peptidyl-prolyl cis-trans isomerase. The chain is Trigger factor from Aeromonas hydrophila subsp. hydrophila (strain ATCC 7966 / DSM 30187 / BCRC 13018 / CCUG 14551 / JCM 1027 / KCTC 2358 / NCIMB 9240 / NCTC 8049).